A 401-amino-acid polypeptide reads, in one-letter code: tRNA(Met) cytidine acetate ligase (401 aa).

ATP contacts are provided by residues 7–20, Gly102, Asn164, and Arg189; that span reads IVEY…HLYH.

The protein belongs to the TmcAL family.

The protein localises to the cytoplasm. It catalyses the reaction cytidine(34) in elongator tRNA(Met) + acetate + ATP = N(4)-acetylcytidine(34) in elongator tRNA(Met) + AMP + diphosphate. In terms of biological role, catalyzes the formation of N(4)-acetylcytidine (ac(4)C) at the wobble position of elongator tRNA(Met), using acetate and ATP as substrates. First activates an acetate ion to form acetyladenylate (Ac-AMP) and then transfers the acetyl group to tRNA to form ac(4)C34. This chain is tRNA(Met) cytidine acetate ligase, found in Thermoanaerobacter sp. (strain X514).